The chain runs to 143 residues: Nucleoside diphosphate kinase (143 aa).

6 residues coordinate ATP: Lys-11, Phe-59, Arg-87, Thr-93, Arg-104, and Asn-114. His-117 serves as the catalytic Pros-phosphohistidine intermediate.

It belongs to the NDK family. In terms of assembly, homotetramer. It depends on Mg(2+) as a cofactor.

The protein resides in the cytoplasm. The enzyme catalyses a 2'-deoxyribonucleoside 5'-diphosphate + ATP = a 2'-deoxyribonucleoside 5'-triphosphate + ADP. It catalyses the reaction a ribonucleoside 5'-diphosphate + ATP = a ribonucleoside 5'-triphosphate + ADP. Functionally, major role in the synthesis of nucleoside triphosphates other than ATP. The ATP gamma phosphate is transferred to the NDP beta phosphate via a ping-pong mechanism, using a phosphorylated active-site intermediate. The sequence is that of Nucleoside diphosphate kinase from Colwellia psychrerythraea (strain 34H / ATCC BAA-681) (Vibrio psychroerythus).